Reading from the N-terminus, the 287-residue chain is 4-hydroxybenzoate octaprenyltransferase (287 aa).

9 helical membrane-spanning segments follow: residues 22 to 42 (IGTL…AQGF), 45 to 65 (LGVL…GCVI), 91 to 111 (TSTE…LLVL), 114 to 134 (NSLT…YPFM), 139 to 159 (QLPQ…AFAA), 161 to 181 (ANAL…WTIA), 212 to 232 (IIIA…GWLE), 236 to 256 (WIYF…QLQI), and 267 to 287 (AFLD…LGYL).

Belongs to the UbiA prenyltransferase family. It depends on Mg(2+) as a cofactor.

It is found in the cell inner membrane. The enzyme catalyses all-trans-octaprenyl diphosphate + 4-hydroxybenzoate = 4-hydroxy-3-(all-trans-octaprenyl)benzoate + diphosphate. It participates in cofactor biosynthesis; ubiquinone biosynthesis. Catalyzes the prenylation of para-hydroxybenzoate (PHB) with an all-trans polyprenyl group. Mediates the second step in the final reaction sequence of ubiquinone-8 (UQ-8) biosynthesis, which is the condensation of the polyisoprenoid side chain with PHB, generating the first membrane-bound Q intermediate 3-octaprenyl-4-hydroxybenzoate. The protein is 4-hydroxybenzoate octaprenyltransferase of Psychromonas ingrahamii (strain DSM 17664 / CCUG 51855 / 37).